Reading from the N-terminus, the 121-residue chain is Small ribosomal subunit protein uS13 (121 aa).

Residues 91-121 (HRRGLPVRGQKTKNNARTRKGPVKTVANKKK) are disordered.

This sequence belongs to the universal ribosomal protein uS13 family. In terms of assembly, part of the 30S ribosomal subunit. Forms a loose heterodimer with protein S19. Forms two bridges to the 50S subunit in the 70S ribosome.

Functionally, located at the top of the head of the 30S subunit, it contacts several helices of the 16S rRNA. In the 70S ribosome it contacts the 23S rRNA (bridge B1a) and protein L5 of the 50S subunit (bridge B1b), connecting the 2 subunits; these bridges are implicated in subunit movement. Contacts the tRNAs in the A and P-sites. This Staphylococcus aureus (strain Mu3 / ATCC 700698) protein is Small ribosomal subunit protein uS13.